The primary structure comprises 156 residues: Small ribosomal subunit protein uS7 (156 aa).

This sequence belongs to the universal ribosomal protein uS7 family. As to quaternary structure, part of the 30S ribosomal subunit. Contacts proteins S9 and S11.

Its function is as follows. One of the primary rRNA binding proteins, it binds directly to 16S rRNA where it nucleates assembly of the head domain of the 30S subunit. Is located at the subunit interface close to the decoding center, probably blocks exit of the E-site tRNA. The polypeptide is Small ribosomal subunit protein uS7 (Bradyrhizobium diazoefficiens (strain JCM 10833 / BCRC 13528 / IAM 13628 / NBRC 14792 / USDA 110)).